The sequence spans 559 residues: Frizzled-5 (559 aa).

Residues Met-1–Ala-26 form the signal peptide. At Ala-27–Met-220 the chain is on the extracellular side. Positions Ser-28 to Tyr-149 constitute an FZ domain. Intrachain disulfides connect Cys-33–Cys-94, Cys-41–Cys-87, Cys-78–Cys-116, Cys-105–Cys-146, and Cys-109–Cys-133. An N-linked (GlcNAc...) asparagine glycan is attached at Asn-47. Asn-150 carries an N-linked (GlcNAc...) asparagine glycan. The chain crosses the membrane as a helical span at residues Phe-221–Val-241. Over Ala-242–Pro-257 the chain is Cytoplasmic. Residues Ile-258–Val-278 form a helical membrane-spanning segment. At Gly-279–Thr-301 the chain is on the extracellular side. The helical transmembrane segment at Ile-302–Thr-322 threads the bilayer. Over Phe-323 to Gln-343 the chain is Cytoplasmic. A helical membrane pass occupies residues Tyr-344–Ser-364. At Ser-365–Gly-387 the chain is on the extracellular side. The helical transmembrane segment at Phe-388 to Phe-408 threads the bilayer. At Val-409–Arg-434 the chain is on the cytoplasmic side. Residues Ile-435–Tyr-455 traverse the membrane as a helical segment. Residues Glu-456–Ala-483 are Extracellular-facing. Asn-468 carries an N-linked (GlcNAc...) asparagine glycan. A helical transmembrane segment spans residues Val-484–Trp-504. Over Ser-505–Val-559 the chain is Cytoplasmic. The Lys-Thr-X-X-X-Trp motif, mediates interaction with the PDZ domain of Dvl family members signature appears at Lys-507–Trp-512. The PDZ-binding signature appears at Ser-557–Val-559.

The protein belongs to the G-protein coupled receptor Fz/Smo family. In terms of tissue distribution, expressed in retina.

The protein resides in the cell membrane. It is found in the golgi apparatus membrane. Its function is as follows. Receptor for Wnt proteins that functions in the canonical Wnt/beta-catenin signaling pathway. The canonical Wnt/beta-catenin signaling pathway leads to the activation of disheveled proteins, inhibition of GSK-3 kinase, nuclear accumulation of beta-catenin and activation of Wnt target genes. A second signaling pathway involving PKC and calcium fluxes has been seen for some family members, but it is not yet clear if it represents a distinct pathway or if it can be integrated in the canonical pathway, as PKC seems to be required for Wnt-mediated inactivation of GSK-3 kinase. Both pathways seem to involve interactions with G-proteins. May be involved in transduction and intercellular transmission of polarity information during tissue morphogenesis and/or in differentiated tissues. The polypeptide is Frizzled-5 (fzd5) (Xenopus laevis (African clawed frog)).